Consider the following 922-residue polypeptide: Alpha-actinin, sarcomeric (922 aa).

Residues 1–252 (MMENGGYVGQ…IMTYVSCYYH (252 aa)) form an actin-binding region. 2 consecutive Calponin-homology (CH) domains span residues 36–140 (KQQK…LRFA) and 149–255 (MTAK…HAFQ). Spectrin repeat units lie at residues 253–393 (AFQG…MVSD), 394–508 (ITNS…RCQR), 509–629 (ICDQ…SADL), and 630–742 (ISRK…TMET). 2 consecutive EF-hand domains span residues 776-811 (EQLTEFRSSFNHFDKNRTGRLAPEEFKSCLVSLGYS) and 817-852 (QGDMDFQRILAVVDPNASGYVQFDAFLDFMTRESTD). Ca(2+) contacts are provided by D789, N791, T793, R795, and E800.

It belongs to the alpha-actinin family. In terms of assembly, homodimer; antiparallel.

F-actin cross-linking protein which is thought to anchor actin to a variety of intracellular structures. This is a bundling protein. This chain is Alpha-actinin, sarcomeric (Actn), found in Anopheles gambiae (African malaria mosquito).